The primary structure comprises 55 residues: ATP synthase F(0) complex subunit 8 (55 aa).

The chain crosses the membrane as a helical span at residues Leu4–Ile24. Positions Thr32–Ser41 are enriched in polar residues. The disordered stretch occupies residues Thr32–Gln55.

Belongs to the ATPase protein 8 family. Component of the ATP synthase complex composed at least of ATP5F1A/subunit alpha, ATP5F1B/subunit beta, ATP5MC1/subunit c (homooctomer), MT-ATP6/subunit a, MT-ATP8/subunit 8, ATP5ME/subunit e, ATP5MF/subunit f, ATP5MG/subunit g, ATP5MK/subunit k, ATP5MJ/subunit j, ATP5F1C/subunit gamma, ATP5F1D/subunit delta, ATP5F1E/subunit epsilon, ATP5PF/subunit F6, ATP5PB/subunit b, ATP5PD/subunit d, ATP5PO/subunit OSCP. ATP synthase complex consists of a soluble F(1) head domain (subunits alpha(3) and beta(3)) - the catalytic core - and a membrane F(0) domain - the membrane proton channel (subunits c, a, 8, e, f, g, k and j). These two domains are linked by a central stalk (subunits gamma, delta, and epsilon) rotating inside the F1 region and a stationary peripheral stalk (subunits F6, b, d, and OSCP).

The protein localises to the mitochondrion membrane. Subunit 8, of the mitochondrial membrane ATP synthase complex (F(1)F(0) ATP synthase or Complex V) that produces ATP from ADP in the presence of a proton gradient across the membrane which is generated by electron transport complexes of the respiratory chain. ATP synthase complex consist of a soluble F(1) head domain - the catalytic core - and a membrane F(1) domain - the membrane proton channel. These two domains are linked by a central stalk rotating inside the F(1) region and a stationary peripheral stalk. During catalysis, ATP synthesis in the catalytic domain of F(1) is coupled via a rotary mechanism of the central stalk subunits to proton translocation. In vivo, can only synthesize ATP although its ATP hydrolase activity can be activated artificially in vitro. Part of the complex F(0) domain. The chain is ATP synthase F(0) complex subunit 8 from Formosania lacustris (Oriental stream loach).